The following is a 477-amino-acid chain: PTS system MurNAc-GlcNAc-specific EIIBC component (477 aa).

Residues Gln5–Glu87 enclose the PTS EIIB type-1 domain. Cys27 (phosphocysteine intermediate; for EIIB activity) is an active-site residue. The interval His91 to Arg113 is disordered. Residues Arg92–Gln104 show a composition bias toward polar residues. The region spanning Lys123–Asp477 is the PTS EIIC type-1 domain. 10 helical membrane passes run Ile128–Val148, Val167–Phe187, Val192–Ile212, Leu227–Ile247, Ile267–Ile287, Val298–Val318, Leu342–Val362, Ala377–Leu397, Phe401–Ile421, and Leu443–Phe463.

Its subcellular location is the cell membrane. The enzyme catalyses N-acetyl-beta-D-muramate-(1-&gt;4)-N-acetyl-D-glucosamine(out) + N(pros)-phospho-L-histidyl-[protein] = 6-phospho-N-acetyl-beta-D-muramate-(1-&gt;4)-N-acetyl-D-glucosamine(in) + L-histidyl-[protein]. It participates in cell wall biogenesis; peptidoglycan recycling. In terms of biological role, the phosphoenolpyruvate-dependent sugar phosphotransferase system (sugar PTS), a major carbohydrate active transport system, catalyzes the phosphorylation of incoming sugar substrates concomitantly with their translocation across the cell membrane. This system is involved in the uptake and phosphorylation of MurNAc-GlcNAc, the principle peptidoglycan turnover product of S.aureus, yielding cytoplasmic MurNAc 6P-GlcNAc. In Staphylococcus haemolyticus (strain JCSC1435), this protein is PTS system MurNAc-GlcNAc-specific EIIBC component.